We begin with the raw amino-acid sequence, 254 residues long: Arginine/ornithine transport ATP-binding protein AotP (254 aa).

Residues 4–249 (LEVQDLHKRY…PQSDRLKQFL (246 aa)) form the ABC transporter domain. 36-43 (GSSGSGKS) contacts ATP.

It belongs to the ABC transporter superfamily.

The protein resides in the cell inner membrane. Part of the arginine-inducible binding-protein-dependent transport system for arginine and ornithine. Probably responsible for energy coupling to the transport system. The protein is Arginine/ornithine transport ATP-binding protein AotP (aotP) of Pseudomonas aeruginosa (strain ATCC 15692 / DSM 22644 / CIP 104116 / JCM 14847 / LMG 12228 / 1C / PRS 101 / PAO1).